The chain runs to 385 residues: ATP phosphoribosyltransferase regulatory subunit (385 aa).

The protein belongs to the class-II aminoacyl-tRNA synthetase family. HisZ subfamily. As to quaternary structure, heteromultimer composed of HisG and HisZ subunits.

The protein localises to the cytoplasm. The protein operates within amino-acid biosynthesis; L-histidine biosynthesis; L-histidine from 5-phospho-alpha-D-ribose 1-diphosphate: step 1/9. Its function is as follows. Required for the first step of histidine biosynthesis. May allow the feedback regulation of ATP phosphoribosyltransferase activity by histidine. This chain is ATP phosphoribosyltransferase regulatory subunit, found in Bordetella pertussis (strain Tohama I / ATCC BAA-589 / NCTC 13251).